The primary structure comprises 131 residues: MNKSLIFLLSFAYSCYSTKTENNFDINDVENKACQYGCGFENVRRTSFRKTYDILYTCSECSTLFDLCIKYRTCQDGCVPEMPVLPYDQAKDVSARIRPPMNPCLDLVTACNYESMDSYEILRSENPFLYI.

Residues M1–S17 form the signal peptide.

Required for spermiogenesis. In Caenorhabditis elegans, this protein is Spermatocyte protein spe-27 (spe-27).